We begin with the raw amino-acid sequence, 482 residues long: UDP-N-acetylmuramate--L-alanine ligase (482 aa).

Residue 122-128 (GTHGKTT) coordinates ATP.

Belongs to the MurCDEF family.

It is found in the cytoplasm. It carries out the reaction UDP-N-acetyl-alpha-D-muramate + L-alanine + ATP = UDP-N-acetyl-alpha-D-muramoyl-L-alanine + ADP + phosphate + H(+). Its pathway is cell wall biogenesis; peptidoglycan biosynthesis. Cell wall formation. This Mycolicibacterium smegmatis (strain ATCC 700084 / mc(2)155) (Mycobacterium smegmatis) protein is UDP-N-acetylmuramate--L-alanine ligase.